A 23-amino-acid polypeptide reads, in one-letter code: Basic phospholipase A2 intermexin (23 aa).

This sequence belongs to the phospholipase A2 family. Group II subfamily. Requires Ca(2+) as cofactor. Contains 7 disulfide bonds. As to expression, expressed by the venom gland.

It is found in the secreted. It carries out the reaction a 1,2-diacyl-sn-glycero-3-phosphocholine + H2O = a 1-acyl-sn-glycero-3-phosphocholine + a fatty acid + H(+). Snake venom phospholipase A2 (PLA2) that shows presynaptic neurotoxicity and low myotoxicity. PLA2 catalyzes the calcium-dependent hydrolysis of the 2-acyl groups in 3-sn-phosphoglycerides. This Gloydius intermedius (Central Asian pit viper) protein is Basic phospholipase A2 intermexin.